Reading from the N-terminus, the 193-residue chain is CASP-like protein 1D2 (193 aa).

At 1–30 (MASTDKPGGDPEYRTSSTPAPAGVDYFKFD) the chain is on the cytoplasmic side. A helical transmembrane segment spans residues 31-51 (VILRFLLFAASLVAVVVIVTA). An N-linked (GlcNAc...) asparagine glycan is attached at asparagine 52. Residues 52 to 73 (NQTEVIRVPQPVPWPAKFRYSP) lie on the Extracellular side of the membrane. Residues 74–94 (AFVYFVAALSVTGLYSIITTL) form a helical membrane-spanning segment. At 95 to 108 (ASLLASNKPALKTK) the chain is on the cytoplasmic side. A helical membrane pass occupies residues 109–129 (LLLYFILWDALILGIIASATG). Residues 130-161 (TAGGVAYLGLKGNRHVVGWNKICHVYDKFCRH) are Extracellular-facing. The chain crosses the membrane as a helical span at residues 162–182 (VGASIAVALFGSVVTVLLIWL). Residues 183–193 (SAYSIHSRVPK) are Cytoplasmic-facing.

It belongs to the Casparian strip membrane proteins (CASP) family. Homodimer and heterodimers.

Its subcellular location is the cell membrane. The sequence is that of CASP-like protein 1D2 from Glycine max (Soybean).